The following is a 100-amino-acid chain: Ubiquitin-related modifier 1 homolog (100 aa).

Residue Gly100 is modified to 1-thioglycine. Gly100 participates in a covalent cross-link: Glycyl lysine isopeptide (Gly-Lys) (interchain with K-? in acceptor proteins).

Belongs to the URM1 family. As to quaternary structure, interacts with cer. In terms of processing, C-terminal thiocarboxylation occurs in 2 steps, it is first acyl-adenylated (-COAMP) via the hesA/moeB/thiF part of the MOCS3 homolog, then thiocarboxylated (-COSH) via the rhodanese domain of the MOCS3 homolog.

Its subcellular location is the cytoplasm. It functions in the pathway tRNA modification; 5-methoxycarbonylmethyl-2-thiouridine-tRNA biosynthesis. Its function is as follows. Acts as a sulfur carrier required for 2-thiolation of mcm(5)S(2)U at tRNA wobble positions of cytosolic tRNA(Lys), tRNA(Glu) and tRNA(Gln). Serves as sulfur donor in tRNA 2-thiolation reaction by being thiocarboxylated (-COSH) at its C-terminus by MOCS3. The sulfur is then transferred to tRNA to form 2-thiolation of mcm(5)S(2)U. Also acts as a ubiquitin-like protein (UBL) that is covalently conjugated via an isopeptide bond to lysine residues of target proteins such as Prx2/Jafrac1, Ciao1, Eip71CD and GILT1. The thiocarboxylated form serves as substrate for conjugation and oxidative stress specifically induces the formation of UBL-protein conjugates. The sequence is that of Ubiquitin-related modifier 1 homolog from Drosophila willistoni (Fruit fly).